The primary structure comprises 301 residues: Tyrosine recombinase XerC (301 aa).

The Core-binding (CB) domain maps to 1 to 89 (MGLDGLAAYL…SWRQYCVWLV (89 aa)). A Tyr recombinase domain is found at 110-290 (RVPKALPQEW…DFDHIARLYD (181 aa)). Residues Arg-151, Lys-175, His-242, Arg-245, and His-268 contribute to the active site. Tyr-277 acts as the O-(3'-phospho-DNA)-tyrosine intermediate in catalysis.

Belongs to the 'phage' integrase family. XerC subfamily. In terms of assembly, forms a cyclic heterotetrameric complex composed of two molecules of XerC and two molecules of XerD.

The protein localises to the cytoplasm. Site-specific tyrosine recombinase, which acts by catalyzing the cutting and rejoining of the recombining DNA molecules. The XerC-XerD complex is essential to convert dimers of the bacterial chromosome into monomers to permit their segregation at cell division. It also contributes to the segregational stability of plasmids. The polypeptide is Tyrosine recombinase XerC (Neisseria meningitidis serogroup B (strain ATCC BAA-335 / MC58)).